The primary structure comprises 570 residues: Phosphoenolpyruvate-protein phosphotransferase (570 aa).

The active-site Tele-phosphohistidine intermediate is the histidine 189. Phosphoenolpyruvate-binding residues include arginine 296 and arginine 332. Glutamate 431 and aspartate 455 together coordinate Mg(2+). Phosphoenolpyruvate-binding positions include 454-455 (ND) and arginine 465. Residue cysteine 502 is the Proton donor of the active site.

This sequence belongs to the PEP-utilizing enzyme family. Homodimer. Mg(2+) serves as cofactor.

The protein resides in the cytoplasm. The enzyme catalyses L-histidyl-[protein] + phosphoenolpyruvate = N(pros)-phospho-L-histidyl-[protein] + pyruvate. Functionally, general (non sugar-specific) component of the phosphoenolpyruvate-dependent sugar phosphotransferase system (sugar PTS). This major carbohydrate active-transport system catalyzes the phosphorylation of incoming sugar substrates concomitantly with their translocation across the cell membrane. Enzyme I transfers the phosphoryl group from phosphoenolpyruvate (PEP) to the phosphoryl carrier protein (HPr). The polypeptide is Phosphoenolpyruvate-protein phosphotransferase (ptsI) (Buchnera aphidicola subsp. Schizaphis graminum (strain Sg)).